A 286-amino-acid chain; its full sequence is Protein FAM87A (286 aa).

Transmembrane regions (helical) follow at residues 68-88 (YLHSSLFLSILFQVTLLETAL) and 161-181 (SFFVVFQAWSLMILQVLGDML).

Belongs to the FAM87 family.

The protein resides in the membrane. This is Protein FAM87A (FAM87A) from Homo sapiens (Human).